Consider the following 61-residue polypeptide: Small ribosomal subunit protein uS14 (61 aa).

Residues C24, C27, C40, and C43 each contribute to the Zn(2+) site.

It belongs to the universal ribosomal protein uS14 family. Zinc-binding uS14 subfamily. Part of the 30S ribosomal subunit. Contacts proteins S3 and S10. Requires Zn(2+) as cofactor.

Binds 16S rRNA, required for the assembly of 30S particles and may also be responsible for determining the conformation of the 16S rRNA at the A site. This is Small ribosomal subunit protein uS14 from Herpetosiphon aurantiacus (strain ATCC 23779 / DSM 785 / 114-95).